The following is a 282-amino-acid chain: F-actin-capping protein subunit beta (282 aa).

A disordered region spans residues S73 to A103. Residues G87–E101 are compositionally biased toward gly residues.

The protein belongs to the F-actin-capping protein beta subunit family. Component of the F-actin capping complex, composed of a heterodimer of an alpha and a beta subunit.

It localises to the cytoplasm. The protein localises to the cytoskeleton. It is found in the actin patch. F-actin-capping proteins bind in a Ca(2+)-independent manner to the fast growing ends of actin filaments (barbed end) thereby blocking the exchange of subunits at these ends. Unlike other capping proteins (such as gelsolin and severin), these proteins do not sever actin filaments. This is F-actin-capping protein subunit beta (CAP2) from Gibberella zeae (strain ATCC MYA-4620 / CBS 123657 / FGSC 9075 / NRRL 31084 / PH-1) (Wheat head blight fungus).